A 589-amino-acid polypeptide reads, in one-letter code: Ufm1-specific protease (589 aa).

The segment at 1–22 (MTNSQTVSLIGPTQMAPQSTPP) is disordered. Catalysis depends on residues Cys421, Asp545, and His547.

The protein belongs to the peptidase C78 family. In terms of assembly, interacts with odr-4. In terms of tissue distribution, expressed in head and tail neurons. Expressed in the amphid head neurons ADL, ASI, ASH, ASJ, ASG, ADF, ASK, AWA, AWB, AWC, and in two tail neurons, the phasmid tail neurons PHA and PHB.

Its subcellular location is the endoplasmic reticulum membrane. It is found in the cytoplasm. The protein resides in the perinuclear region. Functionally, thiol protease which recognizes and hydrolyzes the peptide bond at the C-terminal Gly of ufm-1, a ubiquitin-like modifier protein bound to a number of target proteins. Required, with oct-4, for the localization of a subset of 7 transmembrane domain odorant receptors, including odr-10, to the cilia of olfactory neurons AWA and AWC. Operates in aggregation behavior, and responses to oxygen levels. In Caenorhabditis elegans, this protein is Ufm1-specific protease.